The following is a 5400-amino-acid chain: MAIDGSFNLKLALETFSVRCPKVAAFPCFTSILSKGGEVVDNEEVIHALGDAFLHPEFTVPLVHCFLPIIRNVVDRVVGLLRLVDDLKSSIDYSDDVSSVLDNAMTEGISVIDFYVRRGQRLELHECACLAFSRALHFNTSLLGSILNYFEKAPPPYERILVKDIVSESRMEATDAYLLCLRVSYRFLVIRPEVFSKLWDWSCYLDSMKRLSECPRQQRHFLEKYRDAVWCGIQILSVVLRCSDRLAGCFGFEEEEALSCLLRWEEFCQDIEIEKAGLYIQLPTYTALKSLQQFNTLVPGINKRQSAGLEADEPQMKIRRLDTWDVNSFSEPFEIHSRVKKSFEMVSLAVSQKRPVLLYGPSGSGKSALIRKLADESGNHVVFIHMDDQLDGKTLVGTYVCTDQPGEFRWQPGSLTQAIMNGFWVVLEDIDKAPSDVPLVLSSLLGGSCSFLTSQGEEIRIAETFQLFSTISTPECSVSHIRDAGNSLSPLWRRIVVYPPDRESLQSILGARYPNLGPVAEKLIETFETINSALRPQFSSSTTENSATFSSPSRFSLRDLLKWCERVHGLPSYDGHAVYQEAADIFSASNMSVKNRVAVSEIVASIWNVAVPESQDKPPIQEFSGILKIGRVSLPLGETASHDRSRFVETRTSTRLLEKIARSVEYNEPVLLVGETGTGKTTLVQNLAHWIGQKLTVLNLSQQSDIVDLLGGFKPIDPKLMCTMVYNEFNELARDLKIKDDSKIMKWLQDNFRAKKWHTFLTGLLDIIKGIEGRITERMEGKIGEARSRSGRKRKKPEEELKNCACLRTKVNKIRQQIHSGGMVFTFVEGAFVTALREGHWVLLDEVNLAPPEILGRLIGVLEGVRGSLCLAERGDVMGIPRHLNFRLFACMNPATDAGKRDLPFSFRSRFTEYAVDDDICDDDLEIFVRRFLGGRGSDSKLVANIVWFYKEAKRLSEESLQDGANQKPQYSLRSLYRALEYAIKAEAIGGFQKALYDGFSMFFLSLLDASSAKIVEPIIKRISGENIRSQPLQRYLGELKGSSDKFVGSYVKTKSVIDHLNHLAHAIFIKRYPVLLQGPTSSGKTSLVKYLAAISGNKFVRINNHEQTDIQEYLGSYMTDSSGKLVFHEGALVKAVRGGHWIVLDELNLAPSDVLEALNRLLDDNRELFVPELSETISAHPNFMLFATQNPPTLYGGRKILSRAFRNRFVEIHVDEIPEDELSEILTTKCSIANSHASKMVEVMKDLQRNRQSSKAFAGKHGYITPRDLFRWAYRFRTYDGTSHEELAREGYYILAERLRDDTEKVVVQEVLERHFRVSLAKDDLYNMELPRLDSIQNRKFTWTQSMRRLFFLIDRSYKLREPVLLVGDTGGGKTTICQILSDVKKKRLHILNCHQYTETSDFLGGFFPVRDRSKLITEYENQVKQLELSQALTPFGQDIVICGDISRAEVSIKSVEVALEKYKNGSVIGVAATPQDVDFLEKIRNNMVMLYQKWRAIFVWQDGPLVEAMRAGNIVLVDEISLADDSVLERMNSVLETDRKLSLAEKGGPVLEEVVAHEDFFVLATMNPGGDYGKKELSPALRNRFTEIWVPPITDTEELRSIAFSGLSSLKESNVVDPIINFWEWFNRLHTGRTLTVRDLLSWVAFVNMATESLGPAYAILHGAFLVLLDGLSLGTGFSGRDGQDLREKCFAFLLQQLELFASDTLPLELSRMELYGWGDSKAICEKSKSVRHEGMFGIDPFFISKGDENPEIGGFEFLAPTTHRNVLRVLRAMQLSKPILLEGSPGVGKTSLILALGKYSGHKVVRINLSEQTDMMDLLGSDLPVESDEDMKFAWSDGILLQALKEGSWVLLDELNLAPQSVLEGLNAILDHRAQVFIPELGCTFECPPTFRVFACQNPSTQGGGRKGLPKSFLNRFTKVYVDELVEDDYLFICRSLYPSVPSPLLSKLIALNRQLHDGTMLYRKFGHDGSPWEFNLRDVIRSCQFMQEAIHDLEVESFLNVLYIQRMRTATDRKEVLRIYKAIFDKTPSINPYPRVQLNPAYLVVGTAAIKRNLNQSNIASEQLKLLPEIRQNLEAVAHCVQNKWLCILVGPSSSGKTSVIRILAQLTGYPLNELNLSSATDSSDLLGCFEQYNAFRNFRLVMTRVEHLVDEYNSLLLQSSQEALFSNRSGLVSRWLSYLNKIDSSLVENPLFFLNDSETLSTLEEVVEDLEQVLKEGVLPVSWSKKYLEQISKTILQLQTHEKKQSTKFEWVTGMLIKAIEKGEWVVLKNANLCNPTVLDRINSLVEPCGSITINECGIVNGEPVTVVPHPNFRLFLSVNPKFGEVSRAMRNRGVEVFMMGPHWQLNEDGSNCEELVLRGVERFLALSGIPGYKLVTSMAKAHVHAWLNGQSFGVRITYLELEQWVHLFQLLLMNGNQLLWSLQLSWEHIYLSSLGVTDGKEVVDFVRETYLSDVELSELDSFMGGDLYLPGGWPKPFNLRDLTWYSRETTVRQNCMYLEFLGAQYASHQPKISDNVKSRDRELAAGEPRIIYSIDSWTLKKVLFPKALIGSSCAPDAANFENDLASKMLLFAANWTIEQATEEDIQLYLAWFSWFGSRLQQHCPFLLCFLNTLKVEFEHPIWNHISRCRKNLKFLCRLDPDAVPIPMLSSKLIDVAASNDQSKPYSKSLFESLNSVGVLRRSYQQWLVESNDNHTDVSTFTRFLDSLRVLEKKILCEIVGAPSFSVLIQLYTEVIDNHSFFWSGLVSSSDEYLLFSFWSLIKSIKKMHSFFPGEVQVVLEESKNINNIVLHGHPEKSMLWAYGGHPSLPVSAELFHKQQEFLQLCSTVWPLKSESDEHGNDHLTKAIPFSGPELCLLALEGLCISSYIADEDDVDYVAAVQLDEIYQTFLERLKLEKKRLEDKMGFSEIDNTENITASCCVFCPEIVTTGSGFSSWVKTCFIASSESCSLDVELLAALQHLLVARPTEHQDLVDIRKLLKPALEYSLSSTRPPQTLVAHQKLLWAIDAHASELGVDTKIAGFALEIWYWWHSVLWKNSQIGLMNISDTGNCQILSPSMLIQPVKTATVAQILENVFSVKDYSVQSMKLLSASRYLWKSSQPYQEMPGSLLSIARSLFQQIIYTHQKSFESETFVAIKSVFHAIEKKQNKMDGIQNLISLIGSSSHNKLKSVTHSFVGPLAKRLYSDSSSNALCPTFVEFYCNLGLAWLYLGGLRFHLLNSLDVIDPAMKITCKLLKLEEKISSLELNIKVRGECGYLSGLLYSGNNDESSEHTLSKLKTEHKRLQRKVIFRSDPKKYQDLRRALDEFAGFLTRPISLVNDIEVLDWNQVVEQVFNWQETAISFIDRMSSDYSEYVDITQPIQVSVYEMKLGLSLFVSGALLGKLLNRFDIDMVDSVMETIYALMRFPRDSSIASTTYTECLPPLHLSHGANSRAKSLGLDVGLLHKLISVSSAEDSRKASELQLKVALYKNLHARVLQFVANTGLLDEASFELLDKIYVELARIWMEMKFQAKTKADNLPGLYKFRSRDFKIDSVMEVDISALGKYFPNESFSEWQEYLADDDTKNVKDMTHIDQDEENLEDDWDLIQEHLDSIYSTHNELFGFCDLSEKSGRFCITDSRRLDSFTDSYELGVSMIKGLRGLFTSSLDAKLVPEHLLRLCLENKKNFTSNYQSASKYNFYKDLDGPELGKMVKFLTPLQQRINSLLQEREDHPGLQKLSGVLQMLLAIPSSTPLAKALSGLQFLLCKVHKLQEEGCKLPISDLLEPIISLASSWQKVEFERWPTLLDEVQDQYELNARKLWLPLFSVLFQKDAVEISEHENESISQSLVEFIETSNVGEFRRRLQLLFCFLLQLSMGSSLGIYSSDSHKRRVEMCYNIFGFYIQFLPVVMEQLDLNRKNVETELKEVLKLCRWERPDNYLYNETTKRTRQKVKKLIQKFTDMLRLPVMLVKPDLTKERAQFLPLLDPDLMDGASDMRIEVLVSALDAEQLRDRSSWYVVWWNKLKESVGRFHQEMHYKTLLMGAEHQYSSPVYQGDWKNLWSTVARIGETIAGCSDLWRNSDRDVAKKRALFELLKLLESSGLQKHKFENIEMSNHFKGLLYQPAYDPKHLLLLTHTKSNIHPSMGVEDQNKENSLVEWRVANEFYFKSLASVQLMLNIDRKHSDVTAEQVKRAISFLNHLVEIQRQQRKSAYAFAELFNRFRQCVLSLARLLGDSVGADRKDDSVFSFPQNQHAVFNCLWLQKQLFDNITAMLLEESALLRTVGSTHLDSCQAVKTSSRSLLSFIEILIPIAQNSKASLDRLLLDCNGFIITPSSSLKQFVTQHMVQVLRQNFDQLTDLENQISSFCENNEKSYCRDVLLSQFSPVFKEGKLLAENLNCLLNVRDQSTGMEPKERLFLEENLASIFANVKDVIGKLCSYKDGSLSQEEEMNITTWDGLFKKAENDLNLDNLCKLLSESFGSIEQLLNSSGVLSAGVGDQLKQLQAFLDLLLSFGDCYLKEFLAISKTVSLITHVLASVLADLFTKGFGISKNEEDDDSKVDKSEAAEGTGMGDGVGAKDVSDQIEDEDQLHGTDKKEEEEKEQDDVLGKNKGIEMSDEFDGKEYSVSEDEEEDKEDEGSEDEPLDNGIGDVGSDAEKADEKPWNKDEEDEEENMNEKNESGPSIVDKDTRSRELRAKDDGVETADEPEESNTSDKPEEGNDENVEQDDFDDTDNLEEKIQTKEEALGGLTPDVDNEQIDDDMEMDKTEEVEKEDANQQEEPCSEDQKHPEEGENDQEETQEPSEENMEAEAEDRCGSPQKEEPGNDLEQEPETEPIEGKEVMSEDMMKPNFRNDNISGVESGSQNPHGSNVLGAGSTAPQENLSATDVTDELTDSMDLPSSSNTEMNLMMTNMANGETLTDNLPKMEFPQNQSSTAQQTKVNPYRNVGDALKEWKERVRISSDLGEKQEAENEMEDPDASEYGFASQFDAGTSQALGPALPEQVNTDMREGESEEEKLAGNQDDVSPMDIDDLNPENKPAVQSKPSISNSIAEQVQEPDTDRTHQENSPIHNFGDGNSRMDSMVSVDNTFLGEEACNLDRMQVTDNDSESNQDNQEDPDARSNAVVLWRRCELLTAKPSQELAEQLRLILEPTLASKLSGDYRTGKRINMKKVIPYIASHYRKDKIWLRRTKPNKRDYQVVIAVDDSRSMSESGCGDFAIRALATVCRAMSQLELGSLAVASFGKQGSIKMLHDFGQSFTTESGIKMISNLTFKQENLIEDQPVVNLLRNMNEMLENLASTRRQSYGSNPLQQLVLIIGDGKFHEREKLKRTVRSFLQQKRMVVYLLLDDAEQSVFDLADYVYDGERRPYKKMNYLDSFPFPYYIVLRDIEALPRTLGDVLRQWFELMQSSRD.

AAA-ATPase protomer regions lie at residues 345-571 (MVSL…HGLP), 656-986 (LLEK…AIKA), 1050-1308 (SYVK…EKVV), 1347-1652 (SMRR…VNMA), 1769-2023 (VLRV…VLRI), and 2074-2347 (IRQN…MMGP). ATP-binding positions include 360-367 (GPSGSGKS), 674-681 (GETGTGKT), 1079-1086 (GPTSSGKT), 1369-1376 (GDTGGGKT), 1786-1793 (GSPGVGKT), and 2095-2102 (GPSSSGKT). The interval 2435 to 4569 (IYLSSLGVTD…DGVGAKDVSD (2135 aa)) is linker. Coiled coils occupy residues 2896-2916 (LERL…SEID), 3233-3253 (AMKI…LELN), and 3896-3916 (MEQL…VLKL). Disordered stretches follow at residues 4540 to 4890 (EEDD…SSSN), 4905 to 4929 (TLTD…TKVN), and 4990 to 5069 (QVNT…RMDS). The segment covering 4576-4612 (QLHGTDKKEEEEKEQDDVLGKNKGIEMSDEFDGKEYS) has biased composition (basic and acidic residues). The span at 4613–4631 (VSEDEEEDKEDEGSEDEPL) shows a compositional bias: acidic residues. 2 stretches are compositionally biased toward basic and acidic residues: residues 4641–4652 (DAEKADEKPWNK) and 4661–4687 (MNEK…KDDG). Acidic residues-rich tracts occupy residues 4688 to 4698 (VETADEPEESN) and 4706 to 4721 (GNDE…DTDN). Positions 4722–4732 (LEEKIQTKEEA) are enriched in basic and acidic residues. Positions 4740–4750 (VDNEQIDDDME) are enriched in acidic residues. Residues 4751-4762 (MDKTEEVEKEDA) show a composition bias toward basic and acidic residues. Positions 4779 to 4798 (GENDQEETQEPSEENMEAEA) are enriched in acidic residues. Residues 4799–4810 (EDRCGSPQKEEP) show a composition bias toward basic and acidic residues. The span at 4811-4822 (GNDLEQEPETEP) shows a compositional bias: acidic residues. A compositionally biased stretch (basic and acidic residues) spans 4823–4834 (IEGKEVMSEDMM). Polar residues-rich tracts occupy residues 4839-4855 (RNDN…NPHG), 4864-4874 (TAPQENLSATD), 4916-4928 (PQNQ…QTKV), and 5030-5040 (SKPSISNSIAE). The Nuclear localization signal motif lies at 5157-5164 (MKKVIPYI). The VWFA domain maps to 5186 to 5387 (QVVIAVDDSR…EALPRTLGDV (202 aa)). The stretch at 5271–5291 (VVNLLRNMNEMLENLASTRRQ) forms a coiled coil.

This sequence belongs to the midasin family. As to quaternary structure, associates with pre-60S ribosomes in the nucleoplasm. Constitutively and ubiquitously expressed. Mostly observed in the shoot apex and root tip, and, to a lower extent, in mature seeds, seedling (excluding the hypocotyl), roots, stems, leaves and flowers.

It localises to the nucleus. Its subcellular location is the nucleolus. The protein localises to the nucleoplasm. Its function is as follows. Nuclear chaperone required for maturation and nuclear export of pre-60S ribosome subunits. Functions at successive maturation steps to remove ribosomal factors at critical transition points, first driving the exit of early pre-60S particles from the nucleolus and then driving late pre-60S particles from the nucleus. Required for female gametophyte development. Involved in the expression regulation of genes related to plant growth and development. The sequence is that of Midasin from Arabidopsis thaliana (Mouse-ear cress).